Consider the following 96-residue polypeptide: Bublin coiled-coil protein (96 aa).

The stretch at 39–79 (NSCLDDIEDRNDALNGKLHELLESNRQARKDFRQQLNDEEA) forms a coiled coil. The segment at 63 to 96 (NRQARKDFRQQLNDEEASPPPAEDPASRDTQTED) is disordered. Residues 87–96 (PASRDTQTED) are compositionally biased toward basic and acidic residues.

Belongs to the UPF0184 (EST00098) family.

The protein resides in the cell junction. It is found in the cytoplasm. The protein localises to the cytoskeleton. Essential for intermediate filament organization in intestinal cells, interacts with intermediate filament and regulates intestinal lumen morphology. This is Bublin coiled-coil protein (bbln) from Ctenopharyngodon idella (Grass carp).